The chain runs to 463 residues: Chromosomal replication initiator protein DnaA (463 aa).

The domain I, interacts with DnaA modulators stretch occupies residues 1-83; that stretch reads MSLSLWQQCL…LRFEVGSKPI (83 aa). Residues 83-126 form a domain II region; that stretch reads IVPVAVSSAASSGASVPPAAVRASSLARPSWERVTAQPELSYRS. Residues 127-343 form a domain III, AAA+ region region; it reads NVNPKHTFDN…GALNRVIANA (217 aa). ATP contacts are provided by G171, G173, K174, and T175. The tract at residues 344–463 is domain IV, binds dsDNA; it reads NFTGRAITID…FSNLIRTLSS (120 aa).

The protein belongs to the DnaA family. In terms of assembly, oligomerizes as a right-handed, spiral filament on DNA at oriC.

Its subcellular location is the cytoplasm. Functionally, plays an essential role in the initiation and regulation of chromosomal replication. ATP-DnaA binds to the origin of replication (oriC) to initiate formation of the DNA replication initiation complex once per cell cycle. Binds the DnaA box (a 9 base pair repeat at the origin) and separates the double-stranded (ds)DNA. Forms a right-handed helical filament on oriC DNA; dsDNA binds to the exterior of the filament while single-stranded (ss)DNA is stabiized in the filament's interior. The ATP-DnaA-oriC complex binds and stabilizes one strand of the AT-rich DNA unwinding element (DUE), permitting loading of DNA polymerase. After initiation quickly degrades to an ADP-DnaA complex that is not apt for DNA replication. Binds acidic phospholipids. This chain is Chromosomal replication initiator protein DnaA, found in Edwardsiella ictaluri (strain 93-146).